Consider the following 670-residue polypeptide: Sodium/glucose cotransporter 2 (670 aa).

Residues 1 to 20 lie on the Extracellular side of the membrane; the sequence is MEGHVEEGSELGEQKVLIDN. A helical transmembrane segment spans residues 21-42; that stretch reads PADILVIAAYFLLVIGVGLWSM. The Cytoplasmic segment spans residues 43–61; it reads FRTNRGTVGGYFLAGRSMV. Residues 62-83 traverse the membrane as a helical segment; the sequence is WWPVGASLFASNIGSGHFVGLA. Residues Ala71 and Ile74 each coordinate Na(+). Residues 84 to 91 are Extracellular-facing; sequence GTGAASGL. A helical transmembrane segment spans residues 92–112; it reads AVAGFEWNALFVVLLLGWLFV. The Cytoplasmic segment spans residues 113–134; the sequence is PVYLTAGVITMPQYLRKRFGGR. Residues 135-164 traverse the membrane as a helical segment; that stretch reads RIRLYLSVLSLFLYIFTKISVDMFSGAVFI. Over 165 to 171 the chain is Extracellular; the sequence is QQALGWN. 2 helical membrane-spanning segments follow: residues 172–193 and 194–215; these read IYASVIALLGITMIYTVTGGLA and ALMYTDTVQTFVILAGAFILTG. Topologically, residues 216–273 are extracellular; it reads YAFHEVGGYSGLFDKYLGAVTSLTVSKDPAVGNISSTCYQPRPDSYHLLRDPVTGGLP. N-linked (GlcNAc...) asparagine glycosylation is present at Asn248. 4 cysteine pairs are disulfide-bonded: Cys253/Cys509, Cys343/Cys349, Cys353/Cys359, and Cys515/Cys520. The chain crosses the membrane as a helical span at residues 274–293; sequence WPALLLGLTIVSGWHWCSDQ. The Cytoplasmic segment spans residues 294–307; the sequence is VIVQRCLAGKNLTH. A helical membrane pass occupies residues 308 to 329; sequence IKAGCILCGYLKLMPMFLMVMP. The Extracellular segment spans residues 330 to 373; it reads GMISRILYPDEVACVVPEVCKRVCGTEVGCSNIAYPRLVVKLMP. The chain crosses the membrane as a helical span at residues 374–404; it reads NGLRGLMLAVMLAALMSSLASIFNSSSTLFT. Positions 387, 390, and 391 each coordinate Na(+). Residues 405–422 lie on the Cytoplasmic side of the membrane; sequence MDIYTRLRPRAGDRELLL. A helical membrane pass occupies residues 423-444; the sequence is VGRLWVVFIVAVSVAWLPVVQA. Residues 445–449 are Extracellular-facing; that stretch reads AQGGQ. The helical transmembrane segment at 450–475 threads the bilayer; the sequence is LFDYIQSVSSYLAPPVSAVFVLALFV. Residues 476–480 are Cytoplasmic-facing; the sequence is PRVNE. A helical transmembrane segment spans residues 481 to 503; sequence KGAFWGLIGGLLMGLARLIPEFF. Over 504 to 521 the chain is Extracellular; that stretch reads FGTGSCVRPSACPAIFCR. Residues 522–545 traverse the membrane as a helical segment; that stretch reads VHYLYFAIILFFCSGFLTLAISRC. Over 546-649 the chain is Cytoplasmic; it reads TAPIPQKHLH…DISEDPSWAR (104 aa). Residues 650-668 form a helical membrane-spanning segment; sequence VVNLNALLMMTVAVFLWGF. Over 669-670 the chain is Extracellular; the sequence is YA.

The protein belongs to the sodium:solute symporter (SSF) (TC 2.A.21) family. Forms a heterodimer (via TM13) with PDZK1IP1 (via N-terminal transmembrane helix); this interaction enhances SLC5A2 transporter activity. In terms of processing, glycosylated at a single site. Kidney, in proximal tubule S1 segments.

The protein resides in the apical cell membrane. It carries out the reaction D-glucose(out) + Na(+)(out) = D-glucose(in) + Na(+)(in). Enhanced by the interaction with PDZK1IP1/MAP17. In terms of biological role, electrogenic Na(+)-coupled sugar symporter that actively transports D-glucose at the plasma membrane, with a Na(+) to sugar coupling ratio of 1:1. Transporter activity is driven by a transmembrane Na(+) electrochemical gradient set by the Na(+)/K(+) pump. Unlike SLC5A1/SGLT1, requires the auxiliary protein PDZK1IP1/MAP17 for full transporter activity. Has a primary role in D-glucose reabsorption from glomerular filtrate across the brush border of the early proximal tubules of the kidney. In Rattus norvegicus (Rat), this protein is Sodium/glucose cotransporter 2 (Slc5a2).